The following is a 162-amino-acid chain: Phospholipase A and acyltransferase 3 (162 aa).

At 1-133 (MRAPIPEPKP…VARSDQVRDV (133 aa)) the chain is on the cytoplasmic side. Residues 13–129 (LIEIFRPFYR…LRYGVARSDQ (117 aa)) enclose the LRAT domain. Catalysis depends on residues His23 and His35. Cys113 functions as the Acyl-thioester intermediate in the catalytic mechanism. The helical transmembrane segment at 134–154 (IIAASVAGMGLAAMSLIGVMF) threads the bilayer. Residues 155–162 (SRNKRQKQ) are Lumenal-facing.

This sequence belongs to the H-rev107 family. Interacts with PPP2R1A; this interaction might decrease PP2A activity. As to expression, widely expressed. Low expression, if any, in hematopoietic cells and thymus. In testis, confined to round spermatids. Expressed in normal ovarian epithelial cells. Down-regulated in some ovarian carcinomas and testicular germ cell tumors. Highly expressed in white adipose tissue.

The protein localises to the cell membrane. It localises to the cytoplasm. It is found in the cytosol. Its subcellular location is the perinuclear region. The protein resides in the peroxisome membrane. The protein localises to the mitochondrion membrane. It localises to the nucleus envelope. It is found in the lysosome membrane. Its subcellular location is the endoplasmic reticulum membrane. The catalysed reaction is a 1,2-diacyl-sn-glycero-3-phosphocholine + H2O = a 1-acyl-sn-glycero-3-phosphocholine + a fatty acid + H(+). It catalyses the reaction a 1,2-diacyl-sn-glycero-3-phosphocholine + H2O = a 2-acyl-sn-glycero-3-phosphocholine + a fatty acid + H(+). It carries out the reaction 1,2-dihexadecanoyl-sn-glycero-3-phosphocholine + H2O = 1-hexadecanoyl-sn-glycero-3-phosphocholine + hexadecanoate + H(+). The enzyme catalyses 1,2-dihexadecanoyl-sn-glycero-3-phosphocholine + H2O = 2-hexadecanoyl-sn-glycero-3-phosphocholine + hexadecanoate + H(+). The catalysed reaction is 1-hexadecanoyl-2-(9Z-octadecenoyl)-sn-glycero-3-phosphocholine + H2O = 2-(9Z-octadecenoyl)-sn-glycero-3-phosphocholine + hexadecanoate + H(+). It catalyses the reaction 1-hexadecanoyl-2-(9Z-octadecenoyl)-sn-glycero-3-phosphocholine + H2O = 1-hexadecanoyl-sn-glycero-3-phosphocholine + (9Z)-octadecenoate + H(+). It carries out the reaction 1-hexadecanoyl-2-(5Z,8Z,11Z,14Z-eicosatetraenoyl)-sn-glycero-3-phosphocholine + H2O = 1-hexadecanoyl-sn-glycero-3-phosphocholine + (5Z,8Z,11Z,14Z)-eicosatetraenoate + H(+). The enzyme catalyses 1-hexadecanoyl-2-(5Z,8Z,11Z,14Z-eicosatetraenoyl)-sn-glycero-3-phosphocholine + H2O = 2-(5Z,8Z,11Z,14Z)-eicosatetraenoyl-sn-glycero-3-phosphocholine + hexadecanoate + H(+). The catalysed reaction is 1-hexadecanoyl-2-(9Z,12Z-octadecadienoyl)-sn-glycero-3-phosphoethanolamine + H2O = 1-hexadecanoyl-sn-glycero-3-phosphoethanolamine + (9Z,12Z)-octadecadienoate + H(+). It catalyses the reaction 1-hexadecanoyl-2-(9Z,12Z-octadecadienoyl)-sn-glycero-3-phosphoethanolamine + H2O = 2-(9Z,12Z)-octadecadienoyl-sn-glycero-3-phosphoethanolamine + hexadecanoate + H(+). It carries out the reaction 1-hexadecanoyl-2-(5Z,8Z,11Z,14Z-eicosatetraenoyl)-sn-glycero-3-phosphoethanolamine + H2O = 1-hexadecanoyl-sn-glycero-3-phosphoethanolamine + (5Z,8Z,11Z,14Z)-eicosatetraenoate + H(+). The enzyme catalyses 1-hexadecanoyl-2-(5Z,8Z,11Z,14Z-eicosatetraenoyl)-sn-glycero-3-phosphoethanolamine + H2O = 2-(5Z,8Z,11Z,14Z)-eicosatetraenoyl-sn-glycero-3-phosphoethanolamine + hexadecanoate + H(+). The catalysed reaction is 1-hexanoyl-2-acyl-sn-glycero-3-phosphocholine + H2O = hexanoate + a 2-acyl-sn-glycero-3-phosphocholine + H(+). It catalyses the reaction 1-hexanoyl-2-acyl-sn-glycero-3-phosphocholine + H2O = 1-hexanoyl-sn-glycero-3-phosphocholine + a fatty acid + H(+). It carries out the reaction 1,2-diheptadecanoyl-sn-glycero-3-phosphoethanolamine + 1-(9Z-octadecenoyl)-2-hexadecanoyl-sn-glycero-3-phosphocholine = 1,2-diheptadecanoyl-sn-glycero-3-phospho-N-hexadecanoyl-ethanolamine + 1-(9Z-octadecenoyl)-sn-glycero-3-phosphocholine + H(+). The enzyme catalyses 1,2-diheptadecanoyl-sn-glycero-3-phosphoethanolamine + 1-(9Z-octadecenoyl)-2-hexadecanoyl-sn-glycero-3-phosphocholine = 1,2-diheptadecanoyl-sn-glycero-3-phospho-N-(9Z-octadecenoyl)-ethanolamine + 2-hexadecanoyl-sn-glycero-3-phosphocholine + H(+). The catalysed reaction is 1,2-dihexanoyl-sn-glycero-3-phosphoethanolamine + 2-heptanoyl-sn-glycero-3-phosphocholine = hexanoyl-sn-glycero-3-phosphoethanolamine + 1-hexanoyl-2-heptanoyl-sn-glycero-3-phosphocholine. It catalyses the reaction 1-hexadecanoyl-2-octadecanoyl-sn-glycero-3-phosphocholine + H2O = octadecanoate + 1-hexadecanoyl-sn-glycero-3-phosphocholine + H(+). It carries out the reaction 1-hexadecanoyl-2-octadecanoyl-sn-glycero-3-phosphocholine + H2O = 2-octadecanoyl-sn-glycero-3-phosphocholine + hexadecanoate + H(+). The enzyme catalyses 1-octadecanoyl-2-hexadecanoyl-sn-glycero-3-phosphocholine + H2O = 1-octadecanoyl-sn-glycero-3-phosphocholine + hexadecanoate + H(+). The catalysed reaction is 1-octadecanoyl-2-hexadecanoyl-sn-glycero-3-phosphocholine + H2O = 2-hexadecanoyl-sn-glycero-3-phosphocholine + octadecanoate + H(+). It catalyses the reaction 1-hexadecanoyl-2-(9Z,12Z-octadecadienoyl)-sn-glycero-3-phosphocholine + H2O = (9Z,12Z)-octadecadienoate + 1-hexadecanoyl-sn-glycero-3-phosphocholine + H(+). It carries out the reaction 1-hexadecanoyl-2-(9Z,12Z-octadecadienoyl)-sn-glycero-3-phosphocholine + H2O = 2-(9Z,12Z-octadecadienoyl)-sn-glycero-3-phosphocholine + hexadecanoate + H(+). The enzyme catalyses 1,2-di-(9Z-octadecenoyl)-sn-glycero-3-phosphocholine + H2O = 2-(9Z-octadecenoyl)-sn-glycero-3-phosphocholine + (9Z)-octadecenoate + H(+). The catalysed reaction is 1,2-dihexadecanoyl-sn-glycero-3-phosphocholine + H2O = hexadecanoyl-sn-glycero-3-phosphocholine + hexadecanoate + H(+). It catalyses the reaction 1,2-di-(9Z-octadecenoyl)-sn-glycero-3-phosphocholine + H2O = 1-(9Z-octadecenoyl)-sn-glycero-3-phosphocholine + (9Z)-octadecenoate + H(+). It carries out the reaction 1,2-di-(9Z-octadecenoyl)-sn-glycero-3-phosphoethanolamine + 1,2-dihexadecanoyl-sn-glycero-3-phosphocholine = hexadecanoyl-sn-glycero-3-phosphocholine + N-hexadecanoyl-1,2-di-(9Z-octadecenoyl)-sn-glycero-3-phosphoethanolamine + H(+). The enzyme catalyses 1,2-di-(9Z,12Z-octadecadienoyl)-sn-glycero-3-phosphocholine + H2O = 1-(9Z,12Z)-octadecadienoyl-sn-glycero-3-phosphocholine + (9Z,12Z)-octadecadienoate + H(+). Exhibits both phospholipase A1/2 and acyltransferase activities. Shows phospholipase A1 (PLA1) and A2 (PLA2) activity, catalyzing the calcium-independent release of fatty acids from the sn-1 or sn-2 position of glycerophospholipids. For most substrates, PLA1 activity is much higher than PLA2 activity. Shows O-acyltransferase activity,catalyzing the transfer of a fatty acyl group from glycerophospholipid to the hydroxyl group of lysophospholipid. Shows N-acyltransferase activity, catalyzing the calcium-independent transfer of a fatty acyl group at the sn-1 position of phosphatidylcholine (PC) and other glycerophospholipids to the primary amine of phosphatidylethanolamine (PE), forming N-acylphosphatidylethanolamine (NAPE), which serves as precursor for N-acylethanolamines (NAEs). Exhibits high N-acyltransferase activity and low phospholipase A1/2 activity. Required for complete organelle rupture and degradation that occur during eye lens terminal differentiation, when fiber cells that compose the lens degrade all membrane-bound organelles in order to provide lens with transparency to allow the passage of light. Organelle membrane degradation is probably catalyzed by the phospholipase activity. Functionally, (Microbial infection) Acts as a host factor for picornaviruses: required during early infection to promote viral genome release into the cytoplasm. May act as a cellular sensor of membrane damage at sites of virus entry, which relocalizes to sites of membrane rupture upon virus unfection. Facilitates safe passage of the RNA away from LGALS8, enabling viral genome translation by host ribosome. May also be involved in initiating pore formation, increasing pore size or in maintaining pores for genome delivery. The lipid-modifying enzyme activity is required for this process. The polypeptide is Phospholipase A and acyltransferase 3 (Homo sapiens (Human)).